An 804-amino-acid chain; its full sequence is Tegument protein UL47 homolog (804 aa).

Residues 1–15 (MQSGHYNRRQSRRQR) show a composition bias toward basic residues. Disordered stretches follow at residues 1 to 42 (MQSG…THPP) and 58 to 206 (LNSE…DYFS). Positions 11–31 (SRRQRISSNTTDSPRHTHGTR) match the Nuclear localization signal motif. Positions 32-42 (YRSTNWYTHPP) are enriched in polar residues. A compositionally biased stretch (acidic residues) spans 62-72 (MDQDSSSDASD). Residues 82–93 (STYNGSEQNTST) are compositionally biased toward polar residues. The span at 94-109 (SRHENRIFKLTEREAN) shows a compositional bias: basic and acidic residues. 3 tandem repeats follow at residues 117 to 132 (DAIDDEGEAEEGEAEE), 133 to 148 (DAIDDEGEAEEGEAEE), and 149 to 164 (DAIDDEGEAEEGEAEE). The segment at 117–203 (DAIDDEGEAE…IDDEGEAEED (87 aa)) is 6 X 16 AA approximate tandem repeats. A compositionally biased stretch (acidic residues) spans 118–204 (AIDDEGEAEE…DDEGEAEEDY (87 aa)). The 1-4; truncated repeat unit spans residues 170 to 180 (DAIDDEGEAEE). One copy of the 1-5; truncated repeat lies at 181 to 191 (DAIDDEGEAEE). The stretch at 192-203 (DAIDDEGEAEED) is one 1-6; truncated repeat. Residues 770–792 (QPIPSVDLAENLMQYRNEILGLD) carry the Nuclear export signal motif.

The protein belongs to the alphaherpesvirinae HHV-1 UL47 family. Interacts with US3 kinase. Interacts with ORF24 and ORF27; these interactions seem important for efficient virion nuclear egress. Interacts with ORF17/VHS. Post-translationally, phosphorylated by US3. This phosphorylation is required for proper nuclear localization.

The protein resides in the virion tegument. Its subcellular location is the host nucleus. It is found in the host cytoplasm. Functionally, tegument protein that can bind to various RNA transcripts. Plays a role in the attenuation of selective viral and cellular mRNA degradation by modulating the activity of host shutoff RNase ORF17/VHS. Also plays a role in the primary envelopment of virions in the perinuclear space, probably by interacting with two nuclear egress proteins ORF24 and ORF27. This Varicella-zoster virus (strain Oka vaccine) (HHV-3) protein is Tegument protein UL47 homolog.